Reading from the N-terminus, the 934-residue chain is Bifunctional uridylyltransferase/uridylyl-removing enzyme (934 aa).

Residues 1–379 (MSAHDLKLEE…TFSRRKRKLS (379 aa)) are uridylyltransferase. Positions 380–736 (DDGAFISENH…AKPHAFEAVT (357 aa)) are uridylyl-removing. Residues 496 to 613 (VDEHLLRCIA…IDFADTVQTM (118 aa)) form the HD domain. ACT domains are found at residues 737–818 (EITV…DMLA) and 848–931 (VIEV…RSPQ).

It belongs to the GlnD family. Mg(2+) serves as cofactor.

It catalyses the reaction [protein-PII]-L-tyrosine + UTP = [protein-PII]-uridylyl-L-tyrosine + diphosphate. The catalysed reaction is [protein-PII]-uridylyl-L-tyrosine + H2O = [protein-PII]-L-tyrosine + UMP + H(+). Its activity is regulated as follows. Uridylyltransferase (UTase) activity is inhibited by glutamine, while glutamine activates uridylyl-removing (UR) activity. Its function is as follows. Modifies, by uridylylation and deuridylylation, the PII regulatory proteins (GlnB and homologs), in response to the nitrogen status of the cell that GlnD senses through the glutamine level. Under low glutamine levels, catalyzes the conversion of the PII proteins and UTP to PII-UMP and PPi, while under higher glutamine levels, GlnD hydrolyzes PII-UMP to PII and UMP (deuridylylation). Thus, controls uridylylation state and activity of the PII proteins, and plays an important role in the regulation of nitrogen assimilation and metabolism. The protein is Bifunctional uridylyltransferase/uridylyl-removing enzyme of Brucella ovis (strain ATCC 25840 / 63/290 / NCTC 10512).